The following is a 645-amino-acid chain: Threonine--tRNA ligase (645 aa).

A TGS domain is found at 1 to 63 (MEQINIQFPD…ETDGSIEIVT (63 aa)). Residues 242-540 (DHRKIGKELE…LTEETKGAFP (299 aa)) are catalytic. Zn(2+) is bound by residues C336, H387, and H517.

It belongs to the class-II aminoacyl-tRNA synthetase family. In terms of assembly, homodimer. It depends on Zn(2+) as a cofactor.

It localises to the cytoplasm. It carries out the reaction tRNA(Thr) + L-threonine + ATP = L-threonyl-tRNA(Thr) + AMP + diphosphate + H(+). In terms of biological role, catalyzes the attachment of threonine to tRNA(Thr) in a two-step reaction: L-threonine is first activated by ATP to form Thr-AMP and then transferred to the acceptor end of tRNA(Thr). Also edits incorrectly charged L-seryl-tRNA(Thr). The sequence is that of Threonine--tRNA ligase from Staphylococcus aureus (strain NCTC 8325 / PS 47).